Here is a 238-residue protein sequence, read N- to C-terminus: Probable transglycosylase SceD 3 (238 aa).

The signal sequence occupies residues 1–27; that stretch reads MKKTVVASTLAVGLGVTGFAAGNSADA. A disordered region spans residues 82–161; it reads YGQGSTNAPA…SEASEGSSVN (80 aa). The segment covering 89–156 has biased composition (low complexity); that stretch reads APAQETAEQP…NESSSSEASE (68 aa).

The protein belongs to the transglycosylase family. SceD subfamily.

Its subcellular location is the secreted. Its function is as follows. Is able to cleave peptidoglycan and affects clumping and separation of bacterial cells. This Staphylococcus saprophyticus subsp. saprophyticus (strain ATCC 15305 / DSM 20229 / NCIMB 8711 / NCTC 7292 / S-41) protein is Probable transglycosylase SceD 3 (sceD3).